The primary structure comprises 93 residues: Small integral membrane protein 36 (93 aa).

Residues 14-34 (LIILVASYVILLLVFLISCVL) form a helical membrane-spanning segment. A disordered region spans residues 73–93 (PKGPGLSLGDPAPLGKKSTMV).

The protein resides in the membrane. In Homo sapiens (Human), this protein is Small integral membrane protein 36.